The primary structure comprises 403 residues: Tyrosine--tRNA ligase (403 aa).

The 'HIGH' region motif lies at 45 to 54 (PTAPDLHLGH). Positions 229-233 (KMSKS) match the 'KMSKS' region motif. K232 is a binding site for ATP. The S4 RNA-binding domain maps to 341 to 402 (VLLGRLLAEA…GKRRFARIVF (62 aa)).

Belongs to the class-I aminoacyl-tRNA synthetase family. TyrS type 2 subfamily. In terms of assembly, homodimer.

The protein localises to the cytoplasm. It carries out the reaction tRNA(Tyr) + L-tyrosine + ATP = L-tyrosyl-tRNA(Tyr) + AMP + diphosphate + H(+). In terms of biological role, catalyzes the attachment of tyrosine to tRNA(Tyr) in a two-step reaction: tyrosine is first activated by ATP to form Tyr-AMP and then transferred to the acceptor end of tRNA(Tyr). This Geobacter metallireducens (strain ATCC 53774 / DSM 7210 / GS-15) protein is Tyrosine--tRNA ligase.